Consider the following 912-residue polypeptide: Type II beta methyltransferase M.BslI (912 aa).

This sequence belongs to the N(4)/N(6)-methyltransferase family. N(4) subfamily.

The catalysed reaction is a 2'-deoxycytidine in DNA + S-adenosyl-L-methionine = an N(4)-methyl-2'-deoxycytidine in DNA + S-adenosyl-L-homocysteine + H(+). A beta subtype methylase. Recognizes the double-stranded sequence 5'-CCN(7)GG-3', methylates C-2 on both strands, and protects the DNA from cleavage by the BslI endonuclease. This chain is Type II beta methyltransferase M.BslI (bslIM), found in Bacillus sp. (strain NEB-606).